The following is a 193-amino-acid chain: Adenine phosphoribosyltransferase (193 aa).

Belongs to the purine/pyrimidine phosphoribosyltransferase family. In terms of assembly, homodimer.

Its subcellular location is the cytoplasm. The enzyme catalyses AMP + diphosphate = 5-phospho-alpha-D-ribose 1-diphosphate + adenine. It functions in the pathway purine metabolism; AMP biosynthesis via salvage pathway; AMP from adenine: step 1/1. In terms of biological role, catalyzes a salvage reaction resulting in the formation of AMP, that is energically less costly than de novo synthesis. The protein is Adenine phosphoribosyltransferase of Bifidobacterium adolescentis (strain ATCC 15703 / DSM 20083 / NCTC 11814 / E194a).